A 263-amino-acid chain; its full sequence is Small ribosomal subunit protein eS4, Y isoform 1 (263 aa).

An S4 RNA-binding domain is found at 42-104 (LPLIIFLRNR…TGEHFRLVYD (63 aa)).

It belongs to the eukaryotic ribosomal protein eS4 family.

The sequence is that of Small ribosomal subunit protein eS4, Y isoform 1 (RPS4Y1) from Macaca fuscata fuscata (Japanese macaque).